A 508-amino-acid chain; its full sequence is Maturase K (508 aa).

This sequence belongs to the intron maturase 2 family. MatK subfamily.

Its subcellular location is the plastid. It localises to the chloroplast. Its function is as follows. Usually encoded in the trnK tRNA gene intron. Probably assists in splicing its own and other chloroplast group II introns. This Abies bracteata (Bristle-cone fir) protein is Maturase K.